The primary structure comprises 287 residues: MNVFQMRDKLKDRLNHLDVKFSFNREDETLRISRIDNGKGVTVKINPIVAKYKSQKEKIVDEIVYYVEEAVEQMKGEALENTDNIQIMPVLRSPSFDKKDKNGNSFVIDAHTAETNIYYAVDLGKSYRLIDEAMLEELKLTKQQLKEMALFNVRKLENKYTTDEVKGNIFYFVNSNDGYDASRILNTSFLNEIQAQCEGEMLVAVPHQDVLIIADIRNKTGYDVMAHLTMEFFTKGLVPITSLSLGYDKGHFEPIFILGKNNKQKRDPNVIQRLEATRKQYENKDKK.

Belongs to the UPF0354 family.

This Staphylococcus saprophyticus subsp. saprophyticus (strain ATCC 15305 / DSM 20229 / NCIMB 8711 / NCTC 7292 / S-41) protein is UPF0354 protein SSP1020.